Consider the following 147-residue polypeptide: Deoxyuridine 5'-triphosphate nucleotidohydrolase (147 aa).

Residue arginine 24 coordinates Mg(2+). DUTP-binding positions include 68 to 70 (PRS), 82 to 85 (GVID), tyrosine 88, glycine 93, isoleucine 95, and arginine 111.

This sequence belongs to the dUTPase family. Requires Mg(2+) as cofactor.

The enzyme catalyses dUTP + H2O = dUMP + diphosphate + H(+). Its function is as follows. This enzyme is involved in nucleotide metabolism: it produces dUMP, the immediate precursor of thymidine nucleotides and it decreases the intracellular concentration of dUTP so that uracil cannot be incorporated into DNA. This chain is Deoxyuridine 5'-triphosphate nucleotidohydrolase (OPG046), found in Bos taurus (Bovine).